The sequence spans 210 residues: Large ribosomal subunit protein bL25 (210 aa).

Belongs to the bacterial ribosomal protein bL25 family. CTC subfamily. In terms of assembly, part of the 50S ribosomal subunit; part of the 5S rRNA/L5/L18/L25 subcomplex. Contacts the 5S rRNA. Binds to the 5S rRNA independently of L5 and L18.

This is one of the proteins that binds to the 5S RNA in the ribosome where it forms part of the central protuberance. The polypeptide is Large ribosomal subunit protein bL25 (Saccharophagus degradans (strain 2-40 / ATCC 43961 / DSM 17024)).